A 249-amino-acid polypeptide reads, in one-letter code: Diaminopimelate epimerase (249 aa).

Residues Asn11 and Asn60 each contribute to the substrate site. Cys69 (proton donor) is an active-site residue. Substrate contacts are provided by residues 70–71 (GN), Asn164, and 182–183 (ER). Residue Cys192 is the Proton acceptor of the active site. Substrate is bound at residue 193 to 194 (GT).

It belongs to the diaminopimelate epimerase family. In terms of assembly, homodimer.

It localises to the cytoplasm. It carries out the reaction (2S,6S)-2,6-diaminopimelate = meso-2,6-diaminopimelate. The protein operates within amino-acid biosynthesis; L-lysine biosynthesis via DAP pathway; DL-2,6-diaminopimelate from LL-2,6-diaminopimelate: step 1/1. Its function is as follows. Catalyzes the stereoinversion of LL-2,6-diaminopimelate (L,L-DAP) to meso-diaminopimelate (meso-DAP), a precursor of L-lysine and an essential component of the bacterial peptidoglycan. The polypeptide is Diaminopimelate epimerase (Campylobacter jejuni subsp. jejuni serotype O:23/36 (strain 81-176)).